A 43-amino-acid chain; its full sequence is METATLVAIFISCLLVSFTGYALYTAFGQPSRELRDPFEEHED.

Residues 7–27 (VAIFISCLLVSFTGYALYTAF) traverse the membrane as a helical segment.

It belongs to the PsbN family.

The protein localises to the plastid. Its subcellular location is the chloroplast thylakoid membrane. Its function is as follows. May play a role in photosystem I and II biogenesis. The chain is Protein PsbN from Huperzia lucidula (Shining clubmoss).